Here is a 200-residue protein sequence, read N- to C-terminus: Large ribosomal subunit protein uL4 (200 aa).

The disordered stretch occupies residues 43–72; it reads RAQKTRAEVSGSGKKPWRQKGTGRARSGDI.

Belongs to the universal ribosomal protein uL4 family. As to quaternary structure, part of the 50S ribosomal subunit.

Its function is as follows. One of the primary rRNA binding proteins, this protein initially binds near the 5'-end of the 23S rRNA. It is important during the early stages of 50S assembly. It makes multiple contacts with different domains of the 23S rRNA in the assembled 50S subunit and ribosome. In terms of biological role, forms part of the polypeptide exit tunnel. The protein is Large ribosomal subunit protein uL4 of Haemophilus ducreyi (strain 35000HP / ATCC 700724).